Consider the following 376-residue polypeptide: 26S proteasome non-ATPase regulatory subunit 13 (376 aa).

One can recognise a PCI domain in the interval 171 to 338 (SYYKDALRFL…KRVHMTWVQP (168 aa)). The residue at position 298 (Lys298) is an N6-acetyllysine.

It belongs to the proteasome subunit S11 family. Component of the 19S proteasome regulatory particle complex. The 26S proteasome consists of a 20S core particle (CP) and two 19S regulatory subunits (RP). The regulatory particle is made of a lid composed of 9 subunits including PSMD13, a base containing 6 ATPases and few additional components.

In terms of biological role, component of the 26S proteasome, a multiprotein complex involved in the ATP-dependent degradation of ubiquitinated proteins. This complex plays a key role in the maintenance of protein homeostasis by removing misfolded or damaged proteins, which could impair cellular functions, and by removing proteins whose functions are no longer required. Therefore, the proteasome participates in numerous cellular processes, including cell cycle progression, apoptosis, or DNA damage repair. This Homo sapiens (Human) protein is 26S proteasome non-ATPase regulatory subunit 13 (PSMD13).